The following is a 383-amino-acid chain: uncharacterized protein (383 aa).

Disordered regions lie at residues 1-30 (MDLCQKNETDLENGENNEIQSTEETEPTCT), 114-144 (ETKPPTEGGPEKDQSSPSQTQAAPQGPSTAS), 262-289 (GEKRPSELAKHTVVNDTPSSPSPAARTS), and 341-360 (AKDPRPPVITQKAKQENSPQ). Over residues 10–26 (DLENGENNEIQSTEETE) the composition is skewed to acidic residues. Over residues 128–141 (SSPSQTQAAPQGPS) the composition is skewed to low complexity. A compositionally biased stretch (basic and acidic residues) spans 262 to 271 (GEKRPSELAK).

This is an uncharacterized protein from Macaca fascicularis (Crab-eating macaque).